The primary structure comprises 389 residues: Lipid-A-disaccharide synthase (389 aa).

Belongs to the LpxB family.

The enzyme catalyses a lipid X + a UDP-2-N,3-O-bis[(3R)-3-hydroxyacyl]-alpha-D-glucosamine = a lipid A disaccharide + UDP + H(+). It participates in bacterial outer membrane biogenesis; LPS lipid A biosynthesis. In terms of biological role, condensation of UDP-2,3-diacylglucosamine and 2,3-diacylglucosamine-1-phosphate to form lipid A disaccharide, a precursor of lipid A, a phosphorylated glycolipid that anchors the lipopolysaccharide to the outer membrane of the cell. The chain is Lipid-A-disaccharide synthase from Histophilus somni (strain 2336) (Haemophilus somnus).